Reading from the N-terminus, the 150-residue chain is Endoribonuclease YbeY (150 aa).

Residues H113, H117, and H123 each contribute to the Zn(2+) site.

This sequence belongs to the endoribonuclease YbeY family. It depends on Zn(2+) as a cofactor.

The protein localises to the cytoplasm. Functionally, single strand-specific metallo-endoribonuclease involved in late-stage 70S ribosome quality control and in maturation of the 3' terminus of the 16S rRNA. This Malacoplasma penetrans (strain HF-2) (Mycoplasma penetrans) protein is Endoribonuclease YbeY.